The chain runs to 292 residues: Histamine N-methyltransferase (292 aa).

Position 28 (Glu-28) interacts with substrate. Gly-60, Glu-89, Gln-94, Ser-120, and Ile-142 together coordinate S-adenosyl-L-methionine. Asn-283 contacts substrate.

This sequence belongs to the class I-like SAM-binding methyltransferase superfamily. HNMT family. In terms of assembly, monomer.

The protein resides in the cytoplasm. It carries out the reaction histamine + S-adenosyl-L-methionine = N(tau)-methylhistamine + S-adenosyl-L-homocysteine + H(+). Functionally, inactivates histamine by N-methylation. Plays an important role in degrading histamine and in regulating the airway response to histamine. This Bos taurus (Bovine) protein is Histamine N-methyltransferase (HNMT).